The chain runs to 303 residues: N-acetyl-D-glucosamine kinase (303 aa).

Residues 4-11 (GFDVGGTK) and 133-140 (GFGGGLIF) contribute to the ATP site. Zn(2+) is bound by residues H157, C177, C179, and C184.

It belongs to the ROK (NagC/XylR) family. NagK subfamily.

The enzyme catalyses N-acetyl-D-glucosamine + ATP = N-acetyl-D-glucosamine 6-phosphate + ADP + H(+). It participates in cell wall biogenesis; peptidoglycan recycling. Its function is as follows. Catalyzes the phosphorylation of N-acetyl-D-glucosamine (GlcNAc) derived from cell-wall degradation, yielding GlcNAc-6-P. This chain is N-acetyl-D-glucosamine kinase, found in Aliivibrio fischeri (strain ATCC 700601 / ES114) (Vibrio fischeri).